The primary structure comprises 183 residues: Ribosome rescue factor SmrB (183 aa).

A Smr domain is found at 98–173 (LDLHGLTQLQ…GDAALLVLIE (76 aa)).

The protein belongs to the SmrB family. As to quaternary structure, associates with collided ribosomes, but not with correctly translating polysomes.

Acts as a ribosome collision sensor. Detects stalled/collided disomes (pairs of ribosomes where the leading ribosome is stalled and a second ribosome has collided with it) and endonucleolytically cleaves mRNA at the 5' boundary of the stalled ribosome. Stalled/collided disomes form a new interface (primarily via the 30S subunits) that binds SmrB. Cleaved mRNA becomes available for tmRNA ligation, leading to ribosomal subunit dissociation and rescue of stalled ribosomes. This chain is Ribosome rescue factor SmrB, found in Salmonella agona (strain SL483).